The chain runs to 218 residues: 7-cyano-7-deazaguanine synthase (218 aa).

An ATP-binding site is contributed by 9 to 19; sequence YSGGMDSFTVL. 4 residues coordinate Zn(2+): cysteine 185, cysteine 193, cysteine 196, and cysteine 199.

Belongs to the QueC family. Zn(2+) serves as cofactor.

The catalysed reaction is 7-carboxy-7-deazaguanine + NH4(+) + ATP = 7-cyano-7-deazaguanine + ADP + phosphate + H2O + H(+). Its pathway is purine metabolism; 7-cyano-7-deazaguanine biosynthesis. Functionally, catalyzes the ATP-dependent conversion of 7-carboxy-7-deazaguanine (CDG) to 7-cyano-7-deazaguanine (preQ(0)). This chain is 7-cyano-7-deazaguanine synthase, found in Alteromonas mediterranea (strain DSM 17117 / CIP 110805 / LMG 28347 / Deep ecotype).